Consider the following 236-residue polypeptide: UPF0173 metal-dependent hydrolase DSY1309 (236 aa).

This sequence belongs to the UPF0173 family.

The polypeptide is UPF0173 metal-dependent hydrolase DSY1309 (Desulfitobacterium hafniense (strain Y51)).